A 306-amino-acid chain; its full sequence is Homoserine O-acetyltransferase (306 aa).

The active-site Acyl-thioester intermediate is Cys142. Substrate-binding residues include Lys163 and Ser192. His235 functions as the Proton acceptor in the catalytic mechanism. Glu237 is a catalytic residue. Arg249 is a binding site for substrate.

Belongs to the MetA family.

The protein localises to the cytoplasm. It carries out the reaction L-homoserine + acetyl-CoA = O-acetyl-L-homoserine + CoA. The protein operates within amino-acid biosynthesis; L-methionine biosynthesis via de novo pathway; O-acetyl-L-homoserine from L-homoserine: step 1/1. Transfers an acetyl group from acetyl-CoA to L-homoserine, forming acetyl-L-homoserine. The protein is Homoserine O-acetyltransferase of Brucella melitensis biotype 1 (strain ATCC 23456 / CCUG 17765 / NCTC 10094 / 16M).